Here is a 169-residue protein sequence, read N- to C-terminus: S-ribosylhomocysteine lyase (169 aa).

Residues His-54, His-58, and Cys-128 each coordinate Fe cation.

Belongs to the LuxS family. As to quaternary structure, homodimer. Fe cation serves as cofactor.

The enzyme catalyses S-(5-deoxy-D-ribos-5-yl)-L-homocysteine = (S)-4,5-dihydroxypentane-2,3-dione + L-homocysteine. In terms of biological role, involved in the synthesis of autoinducer 2 (AI-2) which is secreted by bacteria and is used to communicate both the cell density and the metabolic potential of the environment. The regulation of gene expression in response to changes in cell density is called quorum sensing. Catalyzes the transformation of S-ribosylhomocysteine (RHC) to homocysteine (HC) and 4,5-dihydroxy-2,3-pentadione (DPD). This Shewanella sediminis (strain HAW-EB3) protein is S-ribosylhomocysteine lyase.